The primary structure comprises 419 residues: UDP-N-acetylglucosamine 1-carboxyvinyltransferase (419 aa).

22–23 (KN) is a binding site for phosphoenolpyruvate. Residue Arg-95 coordinates UDP-N-acetyl-alpha-D-glucosamine. Catalysis depends on Cys-119, which acts as the Proton donor. Cys-119 is subject to 2-(S-cysteinyl)pyruvic acid O-phosphothioketal. UDP-N-acetyl-alpha-D-glucosamine contacts are provided by residues 164 to 167 (KVSV), Asp-308, and Ile-330.

It belongs to the EPSP synthase family. MurA subfamily.

The protein localises to the cytoplasm. The enzyme catalyses phosphoenolpyruvate + UDP-N-acetyl-alpha-D-glucosamine = UDP-N-acetyl-3-O-(1-carboxyvinyl)-alpha-D-glucosamine + phosphate. The protein operates within cell wall biogenesis; peptidoglycan biosynthesis. In terms of biological role, cell wall formation. Adds enolpyruvyl to UDP-N-acetylglucosamine. The chain is UDP-N-acetylglucosamine 1-carboxyvinyltransferase from Rickettsia peacockii (strain Rustic).